We begin with the raw amino-acid sequence, 258 residues long: UPF0246 protein YPK_3600 (258 aa).

It belongs to the UPF0246 family.

The sequence is that of UPF0246 protein YPK_3600 from Yersinia pseudotuberculosis serotype O:3 (strain YPIII).